Reading from the N-terminus, the 466-residue chain is UDP-N-acetylmuramoylalanine--D-glutamate ligase (466 aa).

139-145 (GTAGKGG) provides a ligand contact to ATP.

The protein belongs to the MurCDEF family.

The protein resides in the cytoplasm. The enzyme catalyses UDP-N-acetyl-alpha-D-muramoyl-L-alanine + D-glutamate + ATP = UDP-N-acetyl-alpha-D-muramoyl-L-alanyl-D-glutamate + ADP + phosphate + H(+). It participates in cell wall biogenesis; peptidoglycan biosynthesis. Cell wall formation. Catalyzes the addition of glutamate to the nucleotide precursor UDP-N-acetylmuramoyl-L-alanine (UMA). The polypeptide is UDP-N-acetylmuramoylalanine--D-glutamate ligase (Deinococcus geothermalis (strain DSM 11300 / CIP 105573 / AG-3a)).